We begin with the raw amino-acid sequence, 285 residues long: uncharacterized protein (285 aa).

The next 6 membrane-spanning stretches (helical) occupy residues 7 to 29 (FYRLVKNTLLTAFILSLILLTLQ), 49 to 71 (LVVWNAYYTYFFIPEGVILSTFF), 95 to 117 (IFLYCSIPFLTFFLISALLSNTL), 137 to 156 (FFSEVPAGTFVSFGAVVLHA), 232 to 254 (KVVNYVNVATLPLFFFLSFTVAL), and 259 to 281 (GGLSYYAFASLFIVVHQLIIFVV).

Its subcellular location is the cell membrane. This is an uncharacterized protein from Aquifex aeolicus (strain VF5).